The primary structure comprises 236 residues: UPF0257 lipoprotein YnfC (236 aa).

A signal peptide spans 1–16 (MKYKLLPCLLAIFLTG). Cys17 carries the N-palmitoyl cysteine lipid modification. Cys17 carries S-diacylglycerol cysteine lipidation.

It belongs to the UPF0257 family.

The protein resides in the cell membrane. This is UPF0257 lipoprotein YnfC from Escherichia coli O17:K52:H18 (strain UMN026 / ExPEC).